The sequence spans 598 residues: Arginine--tRNA ligase (598 aa).

The short motif at 135–145 (ANPTGPIHIGG) is the 'HIGH' region element. The segment at 229–248 (VDGGTDEKGEPLGEGDSEQR) is disordered. The segment covering 231 to 248 (GGTDEKGEPLGEGDSEQR) has biased composition (basic and acidic residues).

Belongs to the class-I aminoacyl-tRNA synthetase family. Monomer.

The protein resides in the cytoplasm. It catalyses the reaction tRNA(Arg) + L-arginine + ATP = L-arginyl-tRNA(Arg) + AMP + diphosphate. The protein is Arginine--tRNA ligase of Bifidobacterium animalis subsp. lactis (strain AD011).